We begin with the raw amino-acid sequence, 113 residues long: Transcriptional regulator RamA (113 aa).

Residues 9-107 (DTIVEWIDDN…NQPPGAYRKE (99 aa)) form the HTH araC/xylS-type domain. DNA-binding regions (H-T-H motif) lie at residues 26-47 (DDIA…LQYK) and 74-97 (VYDI…TRTF).

In terms of assembly, monomer. Interacts with the C-terminus of RNAP subunit RpoA when part of class I or class II promoter complexes. Also interacts with sigma-70/RpoD in class II promoter complexes.

Functionally, transcriptional regulator. Binds to regulatory regions of target genes, including its own gene, efflux pump operon acrAB, antisense RNA gene micF, and various genes involved in lipid A biosynthesis, including lpxO and lpxL-2. Regulates expression of many genes, perhaps including its own; activates various lipid A biosynthetic genes, and as a result of activating acrAB, confers multidrug resistance. Plays a role in virulence and survival in host cells. In Klebsiella pneumoniae subsp. pneumoniae (strain HS11286), this protein is Transcriptional regulator RamA.